The following is a 465-amino-acid chain: Ribulose bisphosphate carboxylase large chain (465 aa).

Residue Lys-4 is modified to N6,N6,N6-trimethyllysine. Residues Asn-113 and Thr-163 each contribute to the substrate site. The active-site Proton acceptor is the Lys-165. Residue Lys-167 coordinates substrate. Mg(2+) is bound by residues Lys-191, Asp-193, and Glu-194. At Lys-191 the chain carries N6-carboxylysine. The Proton acceptor role is filled by His-284. Substrate is bound by residues Arg-285, His-317, and Ser-369.

The protein belongs to the RuBisCO large chain family. Type I subfamily. In terms of assembly, heterohexadecamer of 8 large chains and 8 small chains; disulfide-linked. The disulfide link is formed within the large subunit homodimers. The cofactor is Mg(2+). The disulfide bond which can form in the large chain dimeric partners within the hexadecamer appears to be associated with oxidative stress and protein turnover.

It is found in the plastid. The protein resides in the chloroplast. The enzyme catalyses 2 (2R)-3-phosphoglycerate + 2 H(+) = D-ribulose 1,5-bisphosphate + CO2 + H2O. It catalyses the reaction D-ribulose 1,5-bisphosphate + O2 = 2-phosphoglycolate + (2R)-3-phosphoglycerate + 2 H(+). In terms of biological role, ruBisCO catalyzes two reactions: the carboxylation of D-ribulose 1,5-bisphosphate, the primary event in carbon dioxide fixation, as well as the oxidative fragmentation of the pentose substrate in the photorespiration process. Both reactions occur simultaneously and in competition at the same active site. This Bauera rubioides (Dog rose) protein is Ribulose bisphosphate carboxylase large chain.